We begin with the raw amino-acid sequence, 160 residues long: Nucleotide-binding protein PSHAa2277 (160 aa).

Belongs to the YajQ family.

In terms of biological role, nucleotide-binding protein. The sequence is that of Nucleotide-binding protein PSHAa2277 from Pseudoalteromonas translucida (strain TAC 125).